Reading from the N-terminus, the 153-residue chain is Holo-[acyl-carrier-protein] synthase (153 aa).

Residues aspartate 24 and glutamate 78 each contribute to the Mg(2+) site.

It belongs to the P-Pant transferase superfamily. AcpS family. Mg(2+) serves as cofactor.

The protein localises to the cytoplasm. It carries out the reaction apo-[ACP] + CoA = holo-[ACP] + adenosine 3',5'-bisphosphate + H(+). In terms of biological role, transfers the 4'-phosphopantetheine moiety from coenzyme A to a Ser of acyl-carrier-protein. The polypeptide is Holo-[acyl-carrier-protein] synthase (Bordetella parapertussis (strain 12822 / ATCC BAA-587 / NCTC 13253)).